Reading from the N-terminus, the 206-residue chain is Ribosomal RNA large subunit methyltransferase E (206 aa).

Gly60, Trp62, Asp80, Asp96, and Asp121 together coordinate S-adenosyl-L-methionine. The Proton acceptor role is filled by Lys161.

It belongs to the class I-like SAM-binding methyltransferase superfamily. RNA methyltransferase RlmE family.

Its subcellular location is the cytoplasm. It catalyses the reaction uridine(2552) in 23S rRNA + S-adenosyl-L-methionine = 2'-O-methyluridine(2552) in 23S rRNA + S-adenosyl-L-homocysteine + H(+). Its function is as follows. Specifically methylates the uridine in position 2552 of 23S rRNA at the 2'-O position of the ribose in the fully assembled 50S ribosomal subunit. This Hydrogenovibrio crunogenus (strain DSM 25203 / XCL-2) (Thiomicrospira crunogena) protein is Ribosomal RNA large subunit methyltransferase E.